Reading from the N-terminus, the 352-residue chain is Nicotinate-nucleotide--dimethylbenzimidazole phosphoribosyltransferase (352 aa).

Catalysis depends on glutamate 318, which acts as the Proton acceptor.

The protein belongs to the CobT family.

The catalysed reaction is 5,6-dimethylbenzimidazole + nicotinate beta-D-ribonucleotide = alpha-ribazole 5'-phosphate + nicotinate + H(+). It participates in nucleoside biosynthesis; alpha-ribazole biosynthesis; alpha-ribazole from 5,6-dimethylbenzimidazole: step 1/2. Its function is as follows. Catalyzes the synthesis of alpha-ribazole-5'-phosphate from nicotinate mononucleotide (NAMN) and 5,6-dimethylbenzimidazole (DMB). The chain is Nicotinate-nucleotide--dimethylbenzimidazole phosphoribosyltransferase from Azotobacter vinelandii (strain DJ / ATCC BAA-1303).